The sequence spans 422 residues: Beta-1,3-galactosyltransferase 2 (422 aa).

At 1-24 (MLQWRRRHCCFAKMTWNAKRSLFR) the chain is on the cytoplasmic side. A helical; Signal-anchor for type II membrane protein transmembrane segment spans residues 25–45 (THLIGVLSLVFLFAMFLFFNH). Residues 46–422 (HDWLPGRAGF…AGRYRHRKLH (377 aa)) are Lumenal-facing. Asn75, Asn100, Asn119, Asn176, and Asn226 each carry an N-linked (GlcNAc...) asparagine glycan. Residues 90–110 (TLRPQTATNSNNTDLSPQGVT) are disordered.

It belongs to the glycosyltransferase 31 family. Mn(2+) is required as a cofactor.

It is found in the golgi apparatus membrane. The enzyme catalyses an N-acetyl-beta-D-glucosaminyl derivative + UDP-alpha-D-galactose = a beta-D-galactosyl-(1-&gt;3)-N-acetyl-beta-D-glucosaminyl derivative + UDP + H(+). It catalyses the reaction a beta-D-GlcNAc-(1-&gt;3)-beta-D-Gal-(1-&gt;4)-beta-D-Glc-(1&lt;-&gt;1)-Cer(d18:1(4E)) + UDP-alpha-D-galactose = a beta-D-Gal-(1-&gt;3)-beta-D-GlcNAc-(1-&gt;3)-beta-D-Gal-(1-&gt;4)-beta-D-Glc-(1&lt;-&gt;1')-Cer(d18:1(4E)) + UDP + H(+). It carries out the reaction a neolactoside IV(3)-beta-GlcNAc-nLc4Cer(d18:1(4E)) + UDP-alpha-D-galactose = a neolactoside IV(3)-beta-[Gal-beta-(1-&gt;3)-GlcNAc]-nLc4Cer(d18:1(4E)) + UDP + H(+). It participates in protein modification; protein glycosylation. Its function is as follows. Beta-1,3-galactosyltransferase that transfers galactose from UDP-galactose to substrates with a terminal beta-N-acetylglucosamine (beta-GlcNAc) residue. Can also utilize substrates with a terminal galactose residue, albeit with lower efficiency. Involved in the biosynthesis of the carbohydrate moieties of glycolipids and glycoproteins. Inactive towards substrates with terminal alpha-N-acetylglucosamine (alpha-GlcNAc) or alpha-N-acetylgalactosamine (alpha-GalNAc) residues. This Pongo abelii (Sumatran orangutan) protein is Beta-1,3-galactosyltransferase 2 (B3GALT2).